A 379-amino-acid polypeptide reads, in one-letter code: Putative clathrin assembly protein At1g68110 (379 aa).

Residues 26 to 158 (NSSYRNADLE…SFLSDQIHRL (133 aa)) enclose the ENTH domain.

It is found in the membrane. The protein resides in the clathrin-coated pit. The protein localises to the golgi apparatus. It localises to the cytoplasmic vesicle. Its subcellular location is the clathrin-coated vesicle. In Arabidopsis thaliana (Mouse-ear cress), this protein is Putative clathrin assembly protein At1g68110.